The chain runs to 360 residues: Phospho-N-acetylmuramoyl-pentapeptide-transferase (360 aa).

The next 10 helical transmembrane spans lie at 27-47 (GALF…ISLL), 70-90 (GTPT…ILLW), 98-118 (VWVT…DDYL), 134-154 (LLLE…YSPA), 168-188 (TLLN…VGAG), 199-219 (GLAI…AYLV), 239-259 (LAVV…FNAP), 263-283 (IFMG…IAVA), 288-308 (IVLA…IIQV), and 337-357 (QVVI…LATL).

Belongs to the glycosyltransferase 4 family. MraY subfamily. The cofactor is Mg(2+).

The protein resides in the cell inner membrane. It carries out the reaction UDP-N-acetyl-alpha-D-muramoyl-L-alanyl-gamma-D-glutamyl-meso-2,6-diaminopimeloyl-D-alanyl-D-alanine + di-trans,octa-cis-undecaprenyl phosphate = di-trans,octa-cis-undecaprenyl diphospho-N-acetyl-alpha-D-muramoyl-L-alanyl-D-glutamyl-meso-2,6-diaminopimeloyl-D-alanyl-D-alanine + UMP. It functions in the pathway cell wall biogenesis; peptidoglycan biosynthesis. In terms of biological role, catalyzes the initial step of the lipid cycle reactions in the biosynthesis of the cell wall peptidoglycan: transfers peptidoglycan precursor phospho-MurNAc-pentapeptide from UDP-MurNAc-pentapeptide onto the lipid carrier undecaprenyl phosphate, yielding undecaprenyl-pyrophosphoryl-MurNAc-pentapeptide, known as lipid I. The polypeptide is Phospho-N-acetylmuramoyl-pentapeptide-transferase (Methylorubrum extorquens (strain CM4 / NCIMB 13688) (Methylobacterium extorquens)).